A 398-amino-acid polypeptide reads, in one-letter code: Acetate kinase (398 aa).

Asn7 contacts Mg(2+). Lys14 contacts ATP. Arg91 contributes to the substrate binding site. Asp148 (proton donor/acceptor) is an active-site residue. ATP contacts are provided by residues 208–212 (HLGNG), 283–285 (DFR), and 331–335 (GIGEH). Glu386 contacts Mg(2+).

It belongs to the acetokinase family. Homodimer. Mg(2+) is required as a cofactor. It depends on Mn(2+) as a cofactor.

The protein localises to the cytoplasm. It carries out the reaction acetate + ATP = acetyl phosphate + ADP. It participates in metabolic intermediate biosynthesis; acetyl-CoA biosynthesis; acetyl-CoA from acetate: step 1/2. In terms of biological role, catalyzes the formation of acetyl phosphate from acetate and ATP. Can also catalyze the reverse reaction. This Clostridium botulinum (strain Alaska E43 / Type E3) protein is Acetate kinase.